The sequence spans 451 residues: DNA polymerase IV (451 aa).

One can recognise a UmuC domain in the interval Val5–Gly187. Residues Asp9 and Asp104 each coordinate Mg(2+). Glu105 is an active-site residue.

The protein belongs to the DNA polymerase type-Y family. As to quaternary structure, monomer. Requires Mg(2+) as cofactor.

It is found in the cytoplasm. It catalyses the reaction DNA(n) + a 2'-deoxyribonucleoside 5'-triphosphate = DNA(n+1) + diphosphate. Its function is as follows. Poorly processive, error-prone DNA polymerase involved in untargeted mutagenesis. Copies undamaged DNA at stalled replication forks, which arise in vivo from mismatched or misaligned primer ends. These misaligned primers can be extended by PolIV. Exhibits no 3'-5' exonuclease (proofreading) activity. May be involved in translesional synthesis, in conjunction with the beta clamp from PolIII. The chain is DNA polymerase IV from Corynebacterium diphtheriae (strain ATCC 700971 / NCTC 13129 / Biotype gravis).